The following is a 960-amino-acid chain: Endoplasmic reticulum aminopeptidase 2 (960 aa).

Over 1-20 the chain is Cytoplasmic; the sequence is MFHSSAMVNSHRKPMFNIHR. The helical; Signal-anchor for type II membrane protein transmembrane segment at 21-40 threads the bilayer; the sequence is GFYCLTAILPQICICSQFSV. Residues 41–960 are Lumenal-facing; that stretch reads PSSYHFTEDP…TLRTWLMVNT (920 aa). N85 and N119 each carry an N-linked (GlcNAc...) asparagine glycan. Substrate is bound at residue E200. N219 is a glycosylation site (N-linked (GlcNAc...) asparagine). 334-338 is a binding site for substrate; sequence GAMEN. H370 serves as a coordination point for Zn(2+). The active-site Proton acceptor is E371. The Zn(2+) site is built by H374 and E393. Residue N405 is glycosylated (N-linked (GlcNAc...) asparagine). C421 and C460 are oxidised to a cystine. N650 is a glycosylation site (N-linked (GlcNAc...) asparagine). A disulfide bridge links C759 with C766.

This sequence belongs to the peptidase M1 family. Heterodimer with ERAP1. It depends on Zn(2+) as a cofactor. Post-translationally, N-glycosylated. Ubiquitously expressed. Highly expressed in spleen and leukocytes.

The protein resides in the endoplasmic reticulum membrane. Its function is as follows. Aminopeptidase that plays a central role in peptide trimming, a step required for the generation of most HLA class I-binding peptides. Peptide trimming is essential to customize longer precursor peptides to fit them to the correct length required for presentation on MHC class I molecules. Preferentially hydrolyzes the basic residues Arg and Lys. This Homo sapiens (Human) protein is Endoplasmic reticulum aminopeptidase 2 (ERAP2).